Consider the following 350-residue polypeptide: Olfactory receptor 52I2 (350 aa).

Residues 1 to 55 (MCQQILRDCILLIHHLCINRKKVSLVMLGPAYNHTMETPASFLLVGIPGLQSSHL) are Extracellular-facing. Asn-33 is a glycosylation site (N-linked (GlcNAc...) asparagine). A helical transmembrane segment spans residues 56-76 (WLAISLSAMYIIALLGNTIIV). The Cytoplasmic portion of the chain corresponds to 77–84 (TAIWMDST). A helical membrane pass occupies residues 85-105 (RHEPMYCFLCVLAAVDIVMAS). At 106 to 129 (SVVPKMVSIFCSGDSSISFSACFT) the chain is on the extracellular side. A disulfide bond links Cys-127 and Cys-219. Residues 130–150 (QMFFVHLATAVETGLLLTMAF) form a helical membrane-spanning segment. Over 151 to 169 (DRYVAICKPLHYKRILTPQ) the chain is Cytoplasmic. Residues 170–190 (VMLGMSMAITIRAIIAITPLS) form a helical membrane-spanning segment. Topologically, residues 191–226 (WMVSHLPFCGSNVVVHSYCEHIALARLACADPVPSS) are extracellular. Residues 227-247 (LYSLIGSSLMVGSDVAFIAAS) form a helical membrane-spanning segment. At 248-267 (YILILKAVFGLSSKTAQLKA) the chain is on the cytoplasmic side. The helical transmembrane segment at 268–288 (LSTCGSHVGVMALYYLPGMAS) threads the bilayer. Residues 289–304 (IYAAWLGQDVVPLHTQ) are Extracellular-facing. The chain crosses the membrane as a helical span at residues 305–325 (VLLADLYVIIPATLNPIIYGM). Over 326-350 (RTKQLRERIWSYLMHVLFDHSNLGS) the chain is Cytoplasmic.

This sequence belongs to the G-protein coupled receptor 1 family.

The protein resides in the cell membrane. In terms of biological role, odorant receptor. This chain is Olfactory receptor 52I2 (OR52I2), found in Homo sapiens (Human).